A 35-amino-acid polypeptide reads, in one-letter code: Bacteriocin lactococcin-G subunit beta (35 aa).

In terms of assembly, bacteriocin activity requires interaction of alpha and beta peptides in a molar ratio of 7:1 or 8:1 respectively.

In terms of biological role, kills Lactococci. The chain is Bacteriocin lactococcin-G subunit beta from Lactococcus lactis subsp. lactis (Streptococcus lactis).